Reading from the N-terminus, the 77-residue chain is Large ribosomal subunit protein bL28 (77 aa).

A disordered region spans residues 1-20 (MSRVCQVTGKGPVTGNNISH).

It belongs to the bacterial ribosomal protein bL28 family.

This chain is Large ribosomal subunit protein bL28, found in Pseudomonas fluorescens (strain SBW25).